The sequence spans 180 residues: MKILGIDPGLRTTGFGVIEKQGNKLSYIASGTIKTPDADLPQRLKTILVSVAEVIATYKPDCAAIEKVFVNVNPQSTLLLGQARGAAICALVGADLFVAEYTALQVKQAVVGQGKAQKAQVQDMVQRLLKLSGLPGTDAADALGVAICHAHSGEALSMLGALAPELAKKGLRVRGGRLVG.

Catalysis depends on residues Asp-7, Glu-66, and Asp-138. Mg(2+) contacts are provided by Asp-7, Glu-66, and Asp-138.

It belongs to the RuvC family. Homodimer which binds Holliday junction (HJ) DNA. The HJ becomes 2-fold symmetrical on binding to RuvC with unstacked arms; it has a different conformation from HJ DNA in complex with RuvA. In the full resolvosome a probable DNA-RuvA(4)-RuvB(12)-RuvC(2) complex forms which resolves the HJ. Mg(2+) serves as cofactor.

Its subcellular location is the cytoplasm. It catalyses the reaction Endonucleolytic cleavage at a junction such as a reciprocal single-stranded crossover between two homologous DNA duplexes (Holliday junction).. Functionally, the RuvA-RuvB-RuvC complex processes Holliday junction (HJ) DNA during genetic recombination and DNA repair. Endonuclease that resolves HJ intermediates. Cleaves cruciform DNA by making single-stranded nicks across the HJ at symmetrical positions within the homologous arms, yielding a 5'-phosphate and a 3'-hydroxyl group; requires a central core of homology in the junction. The consensus cleavage sequence is 5'-(A/T)TT(C/G)-3'. Cleavage occurs on the 3'-side of the TT dinucleotide at the point of strand exchange. HJ branch migration catalyzed by RuvA-RuvB allows RuvC to scan DNA until it finds its consensus sequence, where it cleaves and resolves the cruciform DNA. This Herminiimonas arsenicoxydans protein is Crossover junction endodeoxyribonuclease RuvC.